A 398-amino-acid chain; its full sequence is 1-deoxy-D-xylulose 5-phosphate reductoisomerase (398 aa).

5 residues coordinate NADPH: threonine 11, glycine 12, serine 13, isoleucine 14, and asparagine 125. Lysine 126 provides a ligand contact to 1-deoxy-D-xylulose 5-phosphate. Glutamate 127 provides a ligand contact to NADPH. Position 151 (aspartate 151) interacts with Mn(2+). 1-deoxy-D-xylulose 5-phosphate-binding residues include serine 152, glutamate 153, serine 186, and histidine 209. Position 153 (glutamate 153) interacts with Mn(2+). Position 215 (glycine 215) interacts with NADPH. Positions 222, 227, 228, and 231 each coordinate 1-deoxy-D-xylulose 5-phosphate. Glutamate 231 contributes to the Mn(2+) binding site.

The protein belongs to the DXR family. The cofactor is Mg(2+). Mn(2+) serves as cofactor.

It carries out the reaction 2-C-methyl-D-erythritol 4-phosphate + NADP(+) = 1-deoxy-D-xylulose 5-phosphate + NADPH + H(+). The protein operates within isoprenoid biosynthesis; isopentenyl diphosphate biosynthesis via DXP pathway; isopentenyl diphosphate from 1-deoxy-D-xylulose 5-phosphate: step 1/6. Functionally, catalyzes the NADPH-dependent rearrangement and reduction of 1-deoxy-D-xylulose-5-phosphate (DXP) to 2-C-methyl-D-erythritol 4-phosphate (MEP). The polypeptide is 1-deoxy-D-xylulose 5-phosphate reductoisomerase (Acinetobacter baumannii (strain ACICU)).